The sequence spans 757 residues: Protein lsd90 (757 aa).

4 stretches are compositionally biased toward polar residues: residues 1–11 (MVGTINESMQN), 19–36 (TAQS…SSSK), 51–69 (TAGN…SKNL), and 94–118 (DTSN…STYE). Disordered regions lie at residues 1–131 (MVGT…SRSS), 224–244 (ERAR…EKQA), 589–633 (AQAE…KSKS), and 657–757 (AYVG…MSNK). A coiled-coil region spans residues 166 to 604 (DEKTLQDLLE…KVESEYNSVK (439 aa)). Over residues 589–598 (AQAEQSKVES) the composition is skewed to basic and acidic residues. Residues 619–632 (VTTNEPTDVSTKSK) are compositionally biased toward polar residues. Positions 674 to 693 (STPSTLPTSASTNAAATTTT) are enriched in low complexity. Residue 718-725 (GTTGLGKS) participates in ATP binding.

Functionally, may be involved in the metabolism of very long-chain fatty acid-containing phospholipids (VLCFA-PL). The polypeptide is Protein lsd90 (lsd90) (Schizosaccharomyces pombe (strain 972 / ATCC 24843) (Fission yeast)).